The following is a 432-amino-acid chain: Adenylosuccinate synthetase (432 aa).

Residues 13 to 19 and 41 to 43 each bind GTP; these read GDEGKGK and GHT. Residue Asp14 is the Proton acceptor of the active site. The Mg(2+) site is built by Asp14 and Gly41. Residues 14-17, 39-42, Thr130, Arg144, Gln225, Thr240, and Arg304 each bind IMP; these read DEGK and NAGH. Residue His42 is the Proton donor of the active site. 300-306 lines the substrate pocket; that stretch reads ATTGRRR. Residues Arg306, 332-334, and 415-417 each bind GTP; these read KLD and STG.

It belongs to the adenylosuccinate synthetase family. Homodimer. It depends on Mg(2+) as a cofactor.

The protein resides in the cytoplasm. It carries out the reaction IMP + L-aspartate + GTP = N(6)-(1,2-dicarboxyethyl)-AMP + GDP + phosphate + 2 H(+). Its pathway is purine metabolism; AMP biosynthesis via de novo pathway; AMP from IMP: step 1/2. In terms of biological role, plays an important role in the de novo pathway of purine nucleotide biosynthesis. Catalyzes the first committed step in the biosynthesis of AMP from IMP. This chain is Adenylosuccinate synthetase, found in Shigella sonnei (strain Ss046).